A 1032-amino-acid polypeptide reads, in one-letter code: Importin beta-like protein KAP120 (1032 aa).

N-acetylalanine is present on A2. The Importin N-terminal domain maps to 31-103 (AEQQLRQWET…RGRLFEMIDE (73 aa)).

Belongs to the importin beta family. In terms of assembly, interacts with GTP-bound GSP1 and RFP1. Associates with the nuclear pore complex.

It is found in the cytoplasm. It localises to the nucleus. Functionally, functions in nuclear protein import as nuclear transport receptor. Serves as receptor for nuclear localization signals (NLS) in cargo substrates. Thought to mediate docking of the importin/substrate complex to the nuclear pore complex (NPC) through binding to nucleoporin and the complex is subsequently translocated through the pore by an energy requiring, RAN-dependent mechanism. Required for nuclear import of Ho endonuclease and RFP1, and involved in rRNA-processing and assembly or export of 60S ribosomal subunits. In Saccharomyces cerevisiae (strain ATCC 204508 / S288c) (Baker's yeast), this protein is Importin beta-like protein KAP120 (KAP120).